The sequence spans 428 residues: Immunoglobulin superfamily containing leucine-rich repeat protein (428 aa).

The N-terminal stretch at 1 to 18 (MQELHLLWWALLLGLAQA) is a signal peptide. An LRRNT domain is found at 19–50 (CPEPCDCGEKYGFQIADCAYRDLEAVPPGFPA). The N-linked (GlcNAc...) asparagine glycan is linked to asparagine 51. LRR repeat units follow at residues 51–72 (NVTA…AFRE), 75–96 (LLQS…ALAS), 99–122 (HLKS…HNLS), 123–144 (ALQL…AFRS), and 147–168 (ALRS…TFTP). The LRRCT domain maps to 180-231 (NPFDCTCGIVWLKTWALATAVSIPEQDNIACTSPHVLKGTPLSRLPPLPCSA). Residues 232–343 (PSVQLSYQPS…GSAESSVDVA (112 aa)) form the Ig-like domain. Cysteine 257 and cysteine 327 are oxidised to a cystine. A glycan (N-linked (GlcNAc...) asparagine) is linked at asparagine 309.

The protein localises to the secreted. This chain is Immunoglobulin superfamily containing leucine-rich repeat protein (ISLR), found in Pongo abelii (Sumatran orangutan).